A 636-amino-acid polypeptide reads, in one-letter code: Epsin-3 (636 aa).

The a 1,2-diacyl-sn-glycero-3-phospho-(1D-myo-inositol-4,5-bisphosphate) site is built by arginine 8, lysine 11, arginine 25, asparagine 30, arginine 63, and histidine 73. Positions 12-144 constitute an ENTH domain; it reads NIVHNYSEAE…KDEERLRQER (133 aa). The disordered stretch occupies residues 153-503; the sequence is RMALEGMGIG…TPESFLGPSA (351 aa). Over residues 174–189 the composition is skewed to low complexity; the sequence is GSPSSYTSASSSPRYA. A phosphoserine mark is found at serine 184 and serine 185. UIM domains lie at 202-221 and 229-248; these read EEELQLQLALAMSREEAERP and DEDLQLQLALSLSRQEHEKG. Basic and acidic residues-rich tracts occupy residues 214-231 and 242-256; these read SREEAERPVPPASHRDED and RQEHEKGVRSWKGDD. Residue serine 257 is modified to Phosphoserine. Residues 270 to 288 are compositionally biased toward basic and acidic residues; that stretch reads RQRDREPEREERKEEEKLK. Tandem repeats lie at residues 315-317, 338-340, 365-367, 381-383, and 398-400. The segment at 315-400 is 5 X 3 AA repeats of [DE]-P-W; sequence DPWDIPGLRP…KLPSTGADPW (86 aa). The span at 426–435 shows a compositional bias: basic and acidic residues; it reads ESTEPKESRD. Tandem repeats lie at residues 523–525 and 536–538. Residues 523-635 are 3 X 3 AA repeats of N-P-F; the sequence is NPFLTGLGVP…LPPQAGTNPF (113 aa). Residues 607 to 616 are compositionally biased toward pro residues; sequence PPPASLPQPL. A disordered region spans residues 607-636; it reads PPPASLPQPLLPTSGPMGPLPPQAGTNPFL. Residues 633-635 form repeat 3; that stretch reads NPF.

This sequence belongs to the epsin family.

It is found in the cytoplasm. The protein localises to the cell cortex. Its subcellular location is the perinuclear region. It localises to the cytoplasmic vesicle. The protein resides in the clathrin-coated vesicle. The chain is Epsin-3 (Epn3) from Mus musculus (Mouse).